The chain runs to 900 residues: Probable dipeptidyl-aminopeptidase B (900 aa).

The tract at residues 1–83 (MARTDQGLGA…DILSHPRDKS (83 aa)) is disordered. Over 1-90 (MARTDQGLGA…DKSKRSRGSR (90 aa)) the chain is Cytoplasmic. Residues 24 to 39 (NSFSSTDSLSTDGSLF) show a composition bias toward low complexity. Residues 44 to 55 (NATQFQKSTQLP) are compositionally biased toward polar residues. Residues 91-111 (WIWVIGLLCLGGWILAFILFW) traverse the membrane as a helical; Signal-anchor for type II membrane protein segment. Over 112-900 (GRRNNNSDIS…HHVGSALAAT (789 aa)) the chain is Vacuolar. N-linked (GlcNAc...) asparagine glycans are attached at residues Asn150, Asn195, Asn348, Asn410, Asn514, Asn639, and Asn644. The Charge relay system role is filled by Ser753. An N-linked (GlcNAc...) asparagine glycan is attached at Asn812. Catalysis depends on charge relay system residues Asp830 and His863.

This sequence belongs to the peptidase S9B family.

The protein localises to the vacuole membrane. It carries out the reaction Release of an N-terminal dipeptide, Xaa-Yaa-|-Zaa-, from a polypeptide, preferentially when Yaa is Pro, provided Zaa is neither Pro nor hydroxyproline.. Its function is as follows. Type IV dipeptidyl-peptidase which removes N-terminal dipeptides sequentially from polypeptides having unsubstituted N-termini provided that the penultimate residue is proline. The polypeptide is Probable dipeptidyl-aminopeptidase B (dapB) (Talaromyces stipitatus (strain ATCC 10500 / CBS 375.48 / QM 6759 / NRRL 1006) (Penicillium stipitatum)).